We begin with the raw amino-acid sequence, 360 residues long: Histidinol-phosphate aminotransferase (360 aa).

Position 219 is an N6-(pyridoxal phosphate)lysine (lysine 219).

This sequence belongs to the class-II pyridoxal-phosphate-dependent aminotransferase family. Histidinol-phosphate aminotransferase subfamily. As to quaternary structure, homodimer. It depends on pyridoxal 5'-phosphate as a cofactor.

The enzyme catalyses L-histidinol phosphate + 2-oxoglutarate = 3-(imidazol-4-yl)-2-oxopropyl phosphate + L-glutamate. It functions in the pathway amino-acid biosynthesis; L-histidine biosynthesis; L-histidine from 5-phospho-alpha-D-ribose 1-diphosphate: step 7/9. The polypeptide is Histidinol-phosphate aminotransferase (Jannaschia sp. (strain CCS1)).